Reading from the N-terminus, the 75-residue chain is Microcin H47 (75 aa).

Positions 1–15 (MREITESQLRYISGA) are excised as a propeptide. The helical transmembrane segment at 30–50 (AIVGALAGIPGGPLGVVVGAV) threads the bilayer.

It localises to the secreted. Its subcellular location is the host cell membrane. Functionally, bactericidal antibiotic. Active on bacteria phylogenetically related to the producing strain. This is Microcin H47 (mchB) from Escherichia coli O6:H1 (strain CFT073 / ATCC 700928 / UPEC).